Here is a 310-residue protein sequence, read N- to C-terminus: Upstream stimulatory factor 1 (310 aa).

The span at 1–17 shows a compositional bias: polar residues; sequence MKGQQKTAETEEGTVQI. 2 disordered regions span residues 1 to 26 and 171 to 209; these read MKGQ…ATGE and QGGS…EVER. The span at 190–209 shows a compositional bias: basic and acidic residues; sequence EAPRTTRDEKRRAQHNEVER. The 56-residue stretch at 199–254 folds into the bHLH domain; the sequence is KRRAQHNEVERRRRDKINNWIVQLSKIIPDCSMESTKSGQSKGGILSKACDYIQEL. The interval 271 to 292 is leucine-zipper; that stretch reads LQLDNDVLRQQVEDLKNKNLLL. A Glycyl lysine isopeptide (Lys-Gly) (interchain with G-Cter in SUMO2) cross-link involves residue K306.

Efficient DNA binding requires dimerization with another bHLH protein. Binds DNA as a homodimer or a heterodimer (USF1/USF2).

The protein resides in the nucleus. In terms of biological role, transcription factor that binds to a symmetrical DNA sequence (E-boxes) (5'-CACGTG-3') that is found in a variety of viral and cellular promoters. The protein is Upstream stimulatory factor 1 (Usf1) of Mus musculus (Mouse).